Consider the following 712-residue polypeptide: Small ribosomal subunit protein uS3c (712 aa).

The segment at 1–118 (MGQKVHPLGF…IKVSKDLVTN (118 aa)) is S3-like 1st part. The segment at 119–580 (LQKTRKYLFK…LQTAFLTQIE (462 aa)) is intervening sequence (IVS). An S3-like 2nd part region spans residues 581–712 (SQRKMYKANL…VWIFKGYSKI (132 aa)).

Belongs to the universal ribosomal protein uS3 family. Part of the 30S ribosomal subunit.

It localises to the plastid. It is found in the chloroplast. The chain is Small ribosomal subunit protein uS3c (rps3) from Chlamydomonas reinhardtii (Chlamydomonas smithii).